The chain runs to 472 residues: Probable serine/threonine-protein kinase At1g01540 (472 aa).

A helical transmembrane segment spans residues 24-44 (LWVVIGILLGSLIVIALFLLS). Thr67 and Thr143 each carry phosphothreonine. Residues 154-431 (LCEENVIGEG…IHMLEAEDLL (278 aa)) enclose the Protein kinase domain. Residues 160–168 (IGEGGYGIV) and Lys182 contribute to the ATP site. Tyr227 bears the Phosphotyrosine mark. Catalysis depends on Asp280, which acts as the Proton acceptor. The residue at position 284 (Ser284) is a Phosphoserine. Phosphothreonine occurs at positions 314 and 319. Tyr327 is subject to Phosphotyrosine. The span at 437 to 449 (RTTRDHGSRERQE) shows a compositional bias: basic and acidic residues. Positions 437 to 472 (RTTRDHGSRERQETAVVAAGSESGESGSRHHQQKQR) are disordered. The segment covering 451 to 462 (AVVAAGSESGES) has biased composition (low complexity).

This sequence belongs to the protein kinase superfamily. Ser/Thr protein kinase family.

It localises to the membrane. It carries out the reaction L-seryl-[protein] + ATP = O-phospho-L-seryl-[protein] + ADP + H(+). It catalyses the reaction L-threonyl-[protein] + ATP = O-phospho-L-threonyl-[protein] + ADP + H(+). The protein is Probable serine/threonine-protein kinase At1g01540 of Arabidopsis thaliana (Mouse-ear cress).